The sequence spans 294 residues: Ribosomal protein L11 methyltransferase (294 aa).

Residues T145, G166, D188, and N230 each contribute to the S-adenosyl-L-methionine site.

It belongs to the methyltransferase superfamily. PrmA family.

It is found in the cytoplasm. The catalysed reaction is L-lysyl-[protein] + 3 S-adenosyl-L-methionine = N(6),N(6),N(6)-trimethyl-L-lysyl-[protein] + 3 S-adenosyl-L-homocysteine + 3 H(+). Methylates ribosomal protein L11. The sequence is that of Ribosomal protein L11 methyltransferase from Glaesserella parasuis serovar 5 (strain SH0165) (Haemophilus parasuis).